Here is a 188-residue protein sequence, read N- to C-terminus: Josephin-2 (188 aa).

Positions 11–188 (PPSVYHERQR…EEAGCWLNTS (178 aa)) constitute a Josephin domain. Cys24 acts as the Nucleophile in catalysis. Residue His125 is the Proton acceptor of the active site.

The protein localises to the cytoplasm. It localises to the cytosol. It carries out the reaction Thiol-dependent hydrolysis of ester, thioester, amide, peptide and isopeptide bonds formed by the C-terminal Gly of ubiquitin (a 76-residue protein attached to proteins as an intracellular targeting signal).. Cleaves 'Lys-63'-linked poly-ubiquitin chains, and with lesser efficiency 'Lys-48'-linked poly-ubiquitin chains (in vitro). May act as a deubiquitinating enzyme. The polypeptide is Josephin-2 (Josd2) (Mus musculus (Mouse)).